Consider the following 268-residue polypeptide: Centromere protein Q (268 aa).

Positions 1-31 (MSGKANASKKNFEQLKRNPKRKKDNEEVVLS) are disordered. A Phosphoserine modification is found at serine 31. The stretch at 170–203 (ELMTGNIQSLKNKIQILASEVEEEEERVKQIHQI) forms a coiled coil. The residue at position 249 (serine 249) is a Phosphoserine.

Belongs to the CENP-Q/OKP1 family. As to quaternary structure, component of the CENPA-CAD complex, composed of CENPI, CENPK, CENPL, CENPO, CENPP, CENPQ, CENPR and CENPS. The CENPA-CAD complex interacts with the CENPA-NAC complex, at least composed of CENPA, CENPC, CENPH, CENPM, CENPN, CENPT and CENPU.

The protein resides in the nucleus. The protein localises to the chromosome. Its subcellular location is the centromere. Its function is as follows. Component of the CENPA-CAD (nucleosome distal) complex, a complex recruited to centromeres which is involved in assembly of kinetochore proteins, mitotic progression and chromosome segregation. May be involved in incorporation of newly synthesized CENPA into centromeres via its interaction with the CENPA-NAC complex. Plays an important role in chromosome congression and in the recruitment of CENP-O complex (which comprises CENPO, CENPP, CENPQ and CENPU), CENPE and PLK1 to the kinetochores. This Macaca fascicularis (Crab-eating macaque) protein is Centromere protein Q (CENPQ).